A 109-amino-acid polypeptide reads, in one-letter code: Cell division suppressor protein YneA (109 aa).

The LysM domain maps to 39-90 (SEVDVNEGDSIWALADQYAAKSDMAKADFVSWVEKENNLTDGHVKAGDYVVI).

The protein belongs to the YneA family.

It is found in the cytoplasm. Inhibits cell division during the SOS response. Affects a later stage of the cell division protein assembly, after the assembly of the Z ring, by probably suppressing recruitment of FtsL and/or DivIC to the division machinery. The protein is Cell division suppressor protein YneA of Listeria innocua serovar 6a (strain ATCC BAA-680 / CLIP 11262).